A 175-amino-acid polypeptide reads, in one-letter code: MGAAPSKIVETLLEDTNFDRDEIERLRKRFMKLDRDSSGSIDKNEFMSIPGVSANPLAGRIMEVFDADNSGDVDFQEFITGLSIFSGRGSKDEKLKFAFKIYDIDKDGLISNGELFIVLKIMVGSNLDDKQLQQIVDRTIMENDLDGDGQLSFEEFKSAIETTEVAKSLTLQYSV.

EF-hand domains lie at D21–P56, R60–R88, S90–S125, and Q131–A166. Residues D34, D36, S38, S40, E45, D66, D68, S70, D72, E77, D103, D105, D107, E114, D144, D146, D148, Q150, and E155 each coordinate Ca(2+).

The protein belongs to the calcineurin regulatory subunit family. As to quaternary structure, composed of a catalytic subunit (A) and a regulatory subunit (B).

Regulatory subunit of calcineurin, a calcium-dependent, calmodulin stimulated protein phosphatase. Confers calcium sensitivity. This is Calcineurin subunit B (CNB1) from Candida glabrata (strain ATCC 2001 / BCRC 20586 / JCM 3761 / NBRC 0622 / NRRL Y-65 / CBS 138) (Yeast).